A 109-amino-acid polypeptide reads, in one-letter code: Large ribosomal subunit protein uL24 (109 aa).

This sequence belongs to the universal ribosomal protein uL24 family. In terms of assembly, part of the 50S ribosomal subunit.

In terms of biological role, one of two assembly initiator proteins, it binds directly to the 5'-end of the 23S rRNA, where it nucleates assembly of the 50S subunit. Functionally, one of the proteins that surrounds the polypeptide exit tunnel on the outside of the subunit. The sequence is that of Large ribosomal subunit protein uL24 from Legionella pneumophila (strain Corby).